The sequence spans 274 residues: Reaction center protein L chain (274 aa).

At 2–32 (ALLSFERKYRVRGGTLIGGDLFDFWVGPYFV) the chain is on the cytoplasmic side. A helical transmembrane segment spans residues 33-53 (GFFGVSAIFFIFLGVSLIGYA). Topologically, residues 54 to 83 (ASQGPTWDPFAISINPPDLKYGLGAAPLLE) are periplasmic. The helical transmembrane segment at 84 to 111 (GGFWQAITVCALGAFISWMLREVEISRK) threads the bilayer. Residues 112–115 (LGIG) lie on the Cytoplasmic side of the membrane. A helical transmembrane segment spans residues 116–139 (WHVPLAFCVPIFMFCVLQVFRPLL). The Periplasmic segment spans residues 140-170 (LGSWGHAFPYGILSHLDWVNNFGYQYLNWHY). (7R,8Z)-bacteriochlorophyll b is bound by residues His154 and His174. A helical membrane pass occupies residues 171 to 198 (NPGHMSSVSFLFVNAMALGLHGGLILSV). Position 191 (His191) interacts with Fe cation. The Cytoplasmic segment spans residues 199–225 (ANPGDGDKVKTAEHENQYFRDVVGYSI). Phe217 is a binding site for a ubiquinone. A helical transmembrane segment spans residues 226–249 (GALSIHRLGLFLASNIFLTGAFGT). His231 provides a ligand contact to Fe cation. The Periplasmic segment spans residues 250–274 (IASGPFWTRGWPEWWGWWLDIPFWS).

Belongs to the reaction center PufL/M/PsbA/D family. In terms of assembly, reaction center is composed of four bacteriochlorophylls, two bacteriopheophytins, two ubiquinones, one iron, and three highly hydrophobic polypeptide chains (designated L, M, and H).

The protein resides in the cellular chromatophore membrane. Functionally, the reaction center is a membrane-bound complex that mediates the initial photochemical event in the electron transfer process of photosynthesis. The protein is Reaction center protein L chain (pufL) of Blastochloris viridis (Rhodopseudomonas viridis).